A 104-amino-acid polypeptide reads, in one-letter code: Large ribosomal subunit protein bL21 (104 aa).

It belongs to the bacterial ribosomal protein bL21 family. In terms of assembly, part of the 50S ribosomal subunit. Contacts protein L20.

In terms of biological role, this protein binds to 23S rRNA in the presence of protein L20. The sequence is that of Large ribosomal subunit protein bL21 from Clostridium tetani (strain Massachusetts / E88).